A 733-amino-acid polypeptide reads, in one-letter code: uncharacterized protein (733 aa).

A helical membrane pass occupies residues 174–194 (WAVMILASLRPELFGPIIIAG).

The protein resides in the membrane. This is an uncharacterized protein from Rhizobium meliloti (Ensifer meliloti).